Consider the following 205-residue polypeptide: Outer-membrane lipoprotein carrier protein (205 aa).

The N-terminal stretch at 1-19 is a signal peptide; sequence MKKIIICFIFVFSINISFA.

The protein belongs to the LolA family. Monomer.

It localises to the periplasm. Participates in the translocation of lipoproteins from the inner membrane to the outer membrane. Only forms a complex with a lipoprotein if the residue after the N-terminal Cys is not an aspartate (The Asp acts as a targeting signal to indicate that the lipoprotein should stay in the inner membrane). The sequence is that of Outer-membrane lipoprotein carrier protein from Francisella tularensis subsp. novicida (strain U112).